The primary structure comprises 225 residues: Putative membrane protease YugP (225 aa).

His95 lines the Zn(2+) pocket. Glu96 is a catalytic residue. Residues His99 and His103 each contribute to the Zn(2+) site. 3 consecutive transmembrane segments (helical) span residues 116-138, 140-162, and 192-212; these read IFPVVNFASGVAPLLFLGGMLLG, LNLIGLGIILFSAAVFFQLITLP, and VLSAAALTYVAAALVSLFELL.

The protein localises to the cell membrane. The protein is Putative membrane protease YugP (yugP) of Bacillus subtilis (strain 168).